The sequence spans 192 residues: Secreted and transmembrane protein 1A (192 aa).

The N-terminal stretch at 1 to 27 (MMTCPSVPAIPTLWLFSILLLVVSLNA) is a signal peptide. At 28–165 (QNKSWDNPIC…SSPIEGKPGT (138 aa)) the chain is on the extracellular side. N-linked (GlcNAc...) asparagine glycans are attached at residues Asn-29, Asn-55, Asn-84, and Asn-127. A helical membrane pass occupies residues 166-186 (LVGVITVIFILGVAGFITFIY). Residues 187–192 (YRHRRS) are Cytoplasmic-facing.

Belongs to the SECTM family.

It localises to the cell membrane. The protein resides in the secreted. This Mus musculus (Mouse) protein is Secreted and transmembrane protein 1A.